Consider the following 478-residue polypeptide: Trigger factor (478 aa).

The 82-residue stretch at 162–243 (GDFVSIDLSA…VKSIKERELP (82 aa)) folds into the PPIase FKBP-type domain. The segment at 424–478 (KDTDGNDIDTTEFFGPSGGAQAEAEGADEADADSDADSDTEADSDTEADEADEAK) is disordered. Acidic residues predominate over residues 448–478 (EGADEADADSDADSDTEADSDTEADEADEAK).

This sequence belongs to the FKBP-type PPIase family. Tig subfamily.

It is found in the cytoplasm. The enzyme catalyses [protein]-peptidylproline (omega=180) = [protein]-peptidylproline (omega=0). Involved in protein export. Acts as a chaperone by maintaining the newly synthesized protein in an open conformation. Functions as a peptidyl-prolyl cis-trans isomerase. The sequence is that of Trigger factor from Mycobacterium sp. (strain KMS).